Reading from the N-terminus, the 216-residue chain is Protein Syd (216 aa).

It belongs to the Syd family.

It localises to the cell inner membrane. Functionally, interacts with the SecY protein in vivo. May bind preferentially to an uncomplexed state of SecY, thus functioning either as a chelating agent for excess SecY in the cell or as a regulatory factor that negatively controls the translocase function. The protein is Protein Syd of Shewanella sp. (strain MR-4).